Consider the following 2669-residue polypeptide: Nucleosome-remodeling factor subunit NURF301 (2669 aa).

Residues 1–12 (MSGRGSRKRGRP) show a composition bias toward basic residues. The tract at residues 1–121 (MSGRGSRKRG…EEDKSDNEDD (121 aa)) is required for function in nucleosome sliding. The interval 1–125 (MSGRGSRKRG…SDNEDDMLLT (125 aa)) is disordered. The segment at residues 6 to 18 (SRKRGRPPKTPNE) is a DNA-binding region (a.T hook). Residues 38 to 56 (GKSQPSTPSASRGISPQSD) are compositionally biased toward polar residues. A phosphoserine mark is found at Ser-40, Ser-52, Ser-55, Ser-59, and Ser-62. The span at 66–82 (HTNRSRGSAAKRGRGRK) shows a compositional bias: basic residues. Acidic residues predominate over residues 109 to 125 (GDSEEDKSDNEDDMLLT). The 61-residue stretch at 188-248 (NTHVLRALSI…LKAILREEDA (61 aa)) folds into the DDT domain. The PHD-type 1 zinc finger occupies 339–386 (DDHCRVCHRLGDLLCCETCPAVYHLECVDPPMNDVPTEDWQCGLCRSH). Residues 460-515 (RLHSQITERRDEIERQMKLTETLTNEHKHTKRSVIEIEQEAKNELLEKEVLDEDEK) adopt a coiled-coil conformation. Residues 505-538 (LEKEVLDEDEKDGDAKSESQSIEGTKKQEECKMV) form a disordered region. The segment covering 528 to 537 (GTKKQEECKM) has biased composition (basic and acidic residues). Positions 688 to 720 (LQRITSAEREERKKLEKREKRERDDEEERNRLA) form a coiled coil. 3 disordered regions span residues 1026–1048 (EGKR…AESE), 1135–1159 (TGLN…NQKS), and 1406–1425 (RSGL…EPQI). Position 1417 is a phosphoserine (Ser-1417). The residue at position 1527 (Thr-1527) is a Phosphothreonine. Positions 1559-1590 (SRTGGANTAAAAASPTVGGSTSTQSNPSTSTP) are enriched in low complexity. 3 disordered regions span residues 1559–1596 (SRTG…VQII), 2181–2203 (INNG…ITTN), and 2283–2307 (TNEW…QTDD). Polar residues predominate over residues 2283 to 2293 (TNEWETCSRGS). Residues 2338–2373 (KNDEVAELGEQKQSQLERHKELLKKNILRKRSLLER) adopt a coiled-coil conformation. The disordered stretch occupies residues 2382–2432 (DVKTKVQRHVRPLSNASPDEQSENERSGEPNLDFKRTEVQNPRHGAGRPKK). Residues Ser-2395, Ser-2398, and Ser-2403 each carry the phosphoserine modification. Residues 2404-2419 (ENERSGEPNLDFKRTE) are compositionally biased toward basic and acidic residues. The segment at 2481-2546 (EFICIDCKRA…EYVCPECQRK (66 aa)) adopts a PHD-type 2 zinc-finger fold. The 105-residue stretch at 2556–2660 (KLTSNDVEEL…SYFVQKIKNF (105 aa)) folds into the Bromo domain.

This sequence belongs to the BPTF family. Component of the NURF complex composed of Caf1-55, E(bx), Nurf-38 and Iswi. Interacts with Trl. Interacts with histone H3-K4Me3.

The protein resides in the nucleus. Its function is as follows. Histone-binding component of NURF (nucleosome remodeling factor), a complex which catalyzes ATP-dependent nucleosome sliding and facilitates transcription of chromatin. Specifically recognizes H3 tails trimethylated on 'Lys-4' (H3K4me3), which mark transcription start sites of virtually all active genes. Required for homeotic gene expression, proper larval blood cell development, normal male X chromosome morphology, ecdysteroid signaling and metamorphosis. In Drosophila melanogaster (Fruit fly), this protein is Nucleosome-remodeling factor subunit NURF301 (E(bx)).